The following is a 322-amino-acid chain: Thiamine thiazole synthase (322 aa).

Residues Cys-84, 105 to 106, Gly-113, and Val-178 contribute to the substrate site; that span reads EA. Cys-211 bears the 2,3-didehydroalanine (Cys) mark. Substrate is bound by residues Asp-213, His-228, Met-280, and 290–292; that span reads RMG.

This sequence belongs to the THI4 family. Homooctamer. Fe cation serves as cofactor. In terms of processing, during the catalytic reaction, a sulfide is transferred from Cys-211 to a reaction intermediate, generating a dehydroalanine residue.

It is found in the cytoplasm. The protein resides in the nucleus. It carries out the reaction [ADP-thiazole synthase]-L-cysteine + glycine + NAD(+) = [ADP-thiazole synthase]-dehydroalanine + ADP-5-ethyl-4-methylthiazole-2-carboxylate + nicotinamide + 3 H2O + 2 H(+). Its function is as follows. Involved in biosynthesis of the thiamine precursor thiazole. Catalyzes the conversion of NAD and glycine to adenosine diphosphate 5-(2-hydroxyethyl)-4-methylthiazole-2-carboxylic acid (ADT), an adenylated thiazole intermediate. The reaction includes an iron-dependent sulfide transfer from a conserved cysteine residue of the protein to a thiazole intermediate. The enzyme can only undergo a single turnover, which suggests it is a suicide enzyme. May have additional roles in adaptation to various stress conditions and in DNA damage tolerance. This Fusarium vanettenii (strain ATCC MYA-4622 / CBS 123669 / FGSC 9596 / NRRL 45880 / 77-13-4) (Fusarium solani subsp. pisi) protein is Thiamine thiazole synthase.